A 416-amino-acid chain; its full sequence is Adenylosuccinate synthetase (416 aa).

GTP is bound by residues 12-18 (GDEGKGK) and 40-42 (GHT). The Proton acceptor role is filled by Asp13. Mg(2+) is bound by residues Asp13 and Gly40. IMP contacts are provided by residues 13 to 16 (DEGK), 38 to 41 (NAGH), Thr125, Arg139, Gln220, Thr235, and Arg299. His41 (proton donor) is an active-site residue. A substrate-binding site is contributed by 295–301 (TTTGRPR). GTP-binding positions include Arg301, 327–329 (KLD), and 405–407 (STS).

This sequence belongs to the adenylosuccinate synthetase family. In terms of assembly, homodimer. The cofactor is Mg(2+).

The protein resides in the cytoplasm. The enzyme catalyses IMP + L-aspartate + GTP = N(6)-(1,2-dicarboxyethyl)-AMP + GDP + phosphate + 2 H(+). It participates in purine metabolism; AMP biosynthesis via de novo pathway; AMP from IMP: step 1/2. Its function is as follows. Plays an important role in the de novo pathway of purine nucleotide biosynthesis. Catalyzes the first committed step in the biosynthesis of AMP from IMP. The polypeptide is Adenylosuccinate synthetase (Nitratiruptor sp. (strain SB155-2)).